The following is a 123-amino-acid chain: Defensin beta 118 (123 aa).

An N-terminal signal peptide occupies residues 1–19; sequence MKLLLLALPVLVLLPQVIP. 3 disulfides stabilise this stretch: cysteine 27/cysteine 54, cysteine 34/cysteine 48, and cysteine 38/cysteine 55. The propeptide occupies 65–123; that stretch reads VPMTSPTPLSDSTPGIIDDILTVRFTTDYFEVSSKKDMVEESEAGRGTETSLPNVHHSS. The span at 100-110 shows a compositional bias: basic and acidic residues; sequence KDMVEESEAGR. A disordered region spans residues 100-123; it reads KDMVEESEAGRGTETSLPNVHHSS. Polar residues predominate over residues 112–123; that stretch reads TETSLPNVHHSS.

This sequence belongs to the beta-defensin family. Post-translationally, the three-dimensional structure formed by the three intramolecular disulfide bridges is indispensable for antimicrobial activity.

The protein localises to the secreted. Its function is as follows. Host defense peptide that exhibits antimicrobial activity against both Gram-negative bacteria, such as E.coli and S.typhimurium, and Gram-positive bacteria, such as S.aureus and B.subtilis. Inhibits cell adhesion of E.coli on intestinal epithelial enterocytes. Causes rapid permeabilization of both the outer and inner membrane of E.coli, leading to morphological alterations on the bacterial surface. Binds to bacterial lipopolysaccharides (LPS) with high affinity, and may thereby be involved in immunoregulation through LPS neutralization. May contribute to epididymal innate immunity and protect the sperm against attack by microorganisms. The chain is Defensin beta 118 (DEFB118) from Pan troglodytes (Chimpanzee).